Here is a 451-residue protein sequence, read N- to C-terminus: MKTLILAAGLGKRMNSKYPKVIHKILGKPMINWVIDTAKSFGEVGVVLGHKHEMVEKVIPQDVKIFLQNEQLGTAHAVMCGFDFIPEKDNLLILYGDVPFISYETLKRLEKEHIESNSDVTILTAILENPAGYGRIVRGKKIEIVEDKDADEKIKKIKEINTGIYIFKGKFLKENIKKIKNDNAQKEYYLTDILKFTENISTVTTDDIDEVTGVNDRIQLSKLEKNMRKRINEKLMREGVRIIDPESVYIDITVKIGKDTIIYPFTFIEGETEIGEDCVIGPMTRIKDSKIGNNVNVIRSEVEKAIIEDNVSVGPFSRLREGTHLKSNVKIGNFVETKKSVIGKNTKAQHLTYLGDATIGENVNIGAGTITCNYDGVKKHPTIIEDGAFIGSNNSLVAPVKIGKNAITGAGSTITEDVPENSLGLGRARQVVIKDWVLRKKGGNQNADSKE.

The tract at residues Met1–Arg217 is pyrophosphorylase. Residues Leu6–Gly9, Lys20, Gln68, Gly73–Thr74, Tyr95–Asp97, Gly134, Glu146, Asn161, and Asn215 contribute to the UDP-N-acetyl-alpha-D-glucosamine site. Mg(2+) is bound at residue Asp97. Asn215 is a binding site for Mg(2+). A linker region spans residues Ile218–Glu238. The N-acetyltransferase stretch occupies residues Gly239 to Glu451. 2 residues coordinate UDP-N-acetyl-alpha-D-glucosamine: Arg320 and Lys338. His350 acts as the Proton acceptor in catalysis. Residues Tyr353 and Asn364 each coordinate UDP-N-acetyl-alpha-D-glucosamine. Acetyl-CoA-binding positions include Ala367, Asn373–Tyr374, Ser392, Ala410, and Arg427.

This sequence in the N-terminal section; belongs to the N-acetylglucosamine-1-phosphate uridyltransferase family. In the C-terminal section; belongs to the transferase hexapeptide repeat family. In terms of assembly, homotrimer. The cofactor is Mg(2+).

It localises to the cytoplasm. It carries out the reaction alpha-D-glucosamine 1-phosphate + acetyl-CoA = N-acetyl-alpha-D-glucosamine 1-phosphate + CoA + H(+). The catalysed reaction is N-acetyl-alpha-D-glucosamine 1-phosphate + UTP + H(+) = UDP-N-acetyl-alpha-D-glucosamine + diphosphate. It participates in nucleotide-sugar biosynthesis; UDP-N-acetyl-alpha-D-glucosamine biosynthesis; N-acetyl-alpha-D-glucosamine 1-phosphate from alpha-D-glucosamine 6-phosphate (route II): step 2/2. Its pathway is nucleotide-sugar biosynthesis; UDP-N-acetyl-alpha-D-glucosamine biosynthesis; UDP-N-acetyl-alpha-D-glucosamine from N-acetyl-alpha-D-glucosamine 1-phosphate: step 1/1. The protein operates within bacterial outer membrane biogenesis; LPS lipid A biosynthesis. In terms of biological role, catalyzes the last two sequential reactions in the de novo biosynthetic pathway for UDP-N-acetylglucosamine (UDP-GlcNAc). The C-terminal domain catalyzes the transfer of acetyl group from acetyl coenzyme A to glucosamine-1-phosphate (GlcN-1-P) to produce N-acetylglucosamine-1-phosphate (GlcNAc-1-P), which is converted into UDP-GlcNAc by the transfer of uridine 5-monophosphate (from uridine 5-triphosphate), a reaction catalyzed by the N-terminal domain. In Thermosipho africanus (strain TCF52B), this protein is Bifunctional protein GlmU.